We begin with the raw amino-acid sequence, 379 residues long: Queuine tRNA-ribosyltransferase (379 aa).

Aspartate 94 acts as the Proton acceptor in catalysis. Residues 94 to 98 (DSGGF), aspartate 148, glutamine 191, and glycine 218 each bind substrate. The interval 249–255 (GVGSPDS) is RNA binding. The active-site Nucleophile is the aspartate 268. The interval 273 to 277 (TRIAR) is RNA binding; important for wobble base 34 recognition. Positions 306, 308, 311, and 337 each coordinate Zn(2+).

The protein belongs to the queuine tRNA-ribosyltransferase family. As to quaternary structure, homodimer. Within each dimer, one monomer is responsible for RNA recognition and catalysis, while the other monomer binds to the replacement base PreQ1. Zn(2+) serves as cofactor.

The catalysed reaction is 7-aminomethyl-7-carbaguanine + guanosine(34) in tRNA = 7-aminomethyl-7-carbaguanosine(34) in tRNA + guanine. The protein operates within tRNA modification; tRNA-queuosine biosynthesis. Its function is as follows. Catalyzes the base-exchange of a guanine (G) residue with the queuine precursor 7-aminomethyl-7-deazaguanine (PreQ1) at position 34 (anticodon wobble position) in tRNAs with GU(N) anticodons (tRNA-Asp, -Asn, -His and -Tyr). Catalysis occurs through a double-displacement mechanism. The nucleophile active site attacks the C1' of nucleotide 34 to detach the guanine base from the RNA, forming a covalent enzyme-RNA intermediate. The proton acceptor active site deprotonates the incoming PreQ1, allowing a nucleophilic attack on the C1' of the ribose to form the product. After dissociation, two additional enzymatic reactions on the tRNA convert PreQ1 to queuine (Q), resulting in the hypermodified nucleoside queuosine (7-(((4,5-cis-dihydroxy-2-cyclopenten-1-yl)amino)methyl)-7-deazaguanosine). The sequence is that of Queuine tRNA-ribosyltransferase from Halalkalibacterium halodurans (strain ATCC BAA-125 / DSM 18197 / FERM 7344 / JCM 9153 / C-125) (Bacillus halodurans).